The chain runs to 98 residues: NADH-ubiquinone oxidoreductase chain 4L (98 aa).

Transmembrane regions (helical) follow at residues 1-21, 29-49, and 61-81; these read MSMV…GLLM, SLLC…VTIL, and IILL…LVMV.

Belongs to the complex I subunit 4L family. As to quaternary structure, core subunit of respiratory chain NADH dehydrogenase (Complex I) which is composed of 45 different subunits.

It localises to the mitochondrion inner membrane. It catalyses the reaction a ubiquinone + NADH + 5 H(+)(in) = a ubiquinol + NAD(+) + 4 H(+)(out). Functionally, core subunit of the mitochondrial membrane respiratory chain NADH dehydrogenase (Complex I) which catalyzes electron transfer from NADH through the respiratory chain, using ubiquinone as an electron acceptor. Part of the enzyme membrane arm which is embedded in the lipid bilayer and involved in proton translocation. This is NADH-ubiquinone oxidoreductase chain 4L (MT-ND4L) from Callorhinus ursinus (Northern fur seal).